The primary structure comprises 288 residues: Nucleotide-binding protein ASA_0318 (288 aa).

8-15 (GRSGSGKT) lines the ATP pocket. 56–59 (DVRN) provides a ligand contact to GTP.

The protein belongs to the RapZ-like family.

Functionally, displays ATPase and GTPase activities. This is Nucleotide-binding protein ASA_0318 from Aeromonas salmonicida (strain A449).